A 117-amino-acid chain; its full sequence is Nascent polypeptide-associated complex protein (117 aa).

An NAC-A/B domain is found at 3–72 (PVNPRDLEKM…YTVEKPREET (70 aa)).

Belongs to the NAC-alpha family. In terms of assembly, homodimer. Interacts with the ribosome. Binds ribosomal RNA.

Its function is as follows. Contacts the emerging nascent chain on the ribosome. This Aeropyrum pernix (strain ATCC 700893 / DSM 11879 / JCM 9820 / NBRC 100138 / K1) protein is Nascent polypeptide-associated complex protein.